The chain runs to 318 residues: 26 kDa endochitinase 1 (318 aa).

Positions 1–19 are cleaved as a signal peptide; sequence MRAFVLFAVVAMAATMAVA. A Chitin-binding type-1 domain is found at 20–59; the sequence is EQCGSQAGGATCPNCLCCSRFGWCGSTPYCGDGCQSQCSG. 7 disulfides stabilise this stretch: C22–C37, C31–C43, C36–C49, C53–C57, C98–C160, C172–C180, and C279–C311. The active-site Proton donor is the E142.

Belongs to the glycosyl hydrolase 19 family. Chitinase class I subfamily.

It catalyses the reaction Random endo-hydrolysis of N-acetyl-beta-D-glucosaminide (1-&gt;4)-beta-linkages in chitin and chitodextrins.. Functionally, defense against chitin-containing fungal pathogens. The protein is 26 kDa endochitinase 1 of Hordeum vulgare (Barley).